Here is a 236-residue protein sequence, read N- to C-terminus: 7-cyano-7-deazaguanine synthase (236 aa).

Residue Phe-13–Leu-23 participates in ATP binding. 4 residues coordinate Zn(2+): Cys-200, Cys-215, Cys-218, and Cys-221.

This sequence belongs to the QueC family. Zn(2+) is required as a cofactor.

The enzyme catalyses 7-carboxy-7-deazaguanine + NH4(+) + ATP = 7-cyano-7-deazaguanine + ADP + phosphate + H2O + H(+). Its pathway is purine metabolism; 7-cyano-7-deazaguanine biosynthesis. In terms of biological role, catalyzes the ATP-dependent conversion of 7-carboxy-7-deazaguanine (CDG) to 7-cyano-7-deazaguanine (preQ(0)). This is 7-cyano-7-deazaguanine synthase from Parvibaculum lavamentivorans (strain DS-1 / DSM 13023 / NCIMB 13966).